We begin with the raw amino-acid sequence, 441 residues long: 3-phosphoshikimate 1-carboxyvinyltransferase (441 aa).

A compositionally biased stretch (polar residues) spans M1–S10. Positions M1 to G21 are disordered. 3-phosphoshikimate is bound by residues K29, S30, and R34. Phosphoenolpyruvate is bound at residue K29. 2 residues coordinate phosphoenolpyruvate: G103 and R132. 3-phosphoshikimate-binding residues include S177, Q179, D328, and K355. Q179 is a phosphoenolpyruvate binding site. The Proton acceptor role is filled by D328. 2 residues coordinate phosphoenolpyruvate: R359 and R401.

The protein belongs to the EPSP synthase family. As to quaternary structure, monomer.

The protein resides in the cytoplasm. It carries out the reaction 3-phosphoshikimate + phosphoenolpyruvate = 5-O-(1-carboxyvinyl)-3-phosphoshikimate + phosphate. Its pathway is metabolic intermediate biosynthesis; chorismate biosynthesis; chorismate from D-erythrose 4-phosphate and phosphoenolpyruvate: step 6/7. In terms of biological role, catalyzes the transfer of the enolpyruvyl moiety of phosphoenolpyruvate (PEP) to the 5-hydroxyl of shikimate-3-phosphate (S3P) to produce enolpyruvyl shikimate-3-phosphate and inorganic phosphate. The polypeptide is 3-phosphoshikimate 1-carboxyvinyltransferase (Prochlorococcus marinus (strain MIT 9303)).